The sequence spans 148 residues: Homoprotocatechuate degradative operon repressor (148 aa).

One can recognise an HTH marR-type domain in the interval 2-134 (HDSLTIALLQ…LTHLLEEFIA (133 aa)).

Repressor for the homoprotocatechuate catabolic pathway hpc operon. In Escherichia coli, this protein is Homoprotocatechuate degradative operon repressor (hpcR).